Reading from the N-terminus, the 862-residue chain is MLGSNTFKNMQRRHTTLREKGRRQAIRGPAYMFNEKGTSLTPEEERFLDSAEYGNIPVVRKMLEESKTLNFNCVDYMGQNALQLAVGNEHLEVTELLLKKENLARVGDALLLAISKGYVRIVEAILSHPAFAQGQRLTLSPLEQELRDDDFYAYDEDGTRFSHDITPIILAAHCQEYEIVHILLLKGARIERPHDYFCKCNECTEKQRKDSFSHSRSRMNAYKGLASAAYLSLSSEDPVLTALELSNELARLANIETEFKNDYRKLSMQCKDFVVGVLDLCRDTEEVEAILNGDVNLQVWSDHHRPSLSRIKLAIKYEVKKFVAHPNCQQQLLTMWYENLSGLRQQSIAVKFLAVFGVSIGLPFLAIAYWIAPCSKLGQTLRSPFMKFVAHAVSFTIFLGLLVVNASDRFEGVKTLPNETFTDYPKQIFRVKTTQFSWTEMLIMKWVLGMIWSECKEIWEEGPREYVLHLWNLLDFGMLSIFVASFTARFMAFLKASEAQLYVDQYVQDVTLHNVSLPPEVAYFTYARDKWWPSDPQIISEGLYAIAVVLSFSRIAYILPANESFGPLQISLGRTVKDIFKFMVIFIMVFVAFMIGMFNLYSYYRGAKYNPAFTTVEESFKTLFWSIFGLSEVISVVLKYDHKFIENIGYVLYGVYNVTMVVVLLNMLIAMINNSYQEIEEDADVEWKFARAKLWLSYFDEGRTLPAPFNLVPSPKSFYYLIMRIKMCLIELCQSKAKRCENDLEMGMLNSKFRKTRYQAGMRNSENLTANSTFSKPTRYQKIMKRLIKRYVLKAQVDRENDEVNEGELKEIKQDISSLRYELLEEKSQATGELADLIQQLSEKFGKNLNKDHLRVNQGKDI.

Positions 1–21 are disordered; sequence MLGSNTFKNMQRRHTTLREKG. Residues 1 to 351 are Cytoplasmic-facing; that stretch reads MLGSNTFKNM…GLRQQSIAVK (351 aa). A compositionally biased stretch (basic residues) spans 10–21; the sequence is MQRRHTTLREKG. T15 bears the Phosphothreonine; by PKG/PRKG1 mark. 4 ANK repeats span residues 42 to 71, 77 to 106, 108 to 134, and 163 to 192; these read PEEE…TLNF, MGQN…LARV, DALL…FAQG, and HDIT…RIER. Residues 352-372 form a helical membrane-spanning segment; it reads FLAVFGVSIGLPFLAIAYWIA. Residues 373-383 are Extracellular-facing; the sequence is PCSKLGQTLRS. A helical transmembrane segment spans residues 384-404; it reads PFMKFVAHAVSFTIFLGLLVV. Residues 405–465 lie on the Cytoplasmic side of the membrane; sequence NASDRFEGVK…KEIWEEGPRE (61 aa). Residues 466–486 form a helical membrane-spanning segment; that stretch reads YVLHLWNLLDFGMLSIFVASF. Residues 487-537 lie on the Extracellular side of the membrane; sequence TARFMAFLKASEAQLYVDQYVQDVTLHNVSLPPEVAYFTYARDKWWPSDPQ. N514 carries N-linked (GlcNAc...) asparagine glycosylation. Residues 538 to 558 traverse the membrane as a helical segment; it reads IISEGLYAIAVVLSFSRIAYI. Over 559–581 the chain is Cytoplasmic; it reads LPANESFGPLQISLGRTVKDIFK. Residues 582-602 traverse the membrane as a helical segment; it reads FMVIFIMVFVAFMIGMFNLYS. Residues 603 to 651 lie on the Extracellular side of the membrane; it reads YYRGAKYNPAFTTVEESFKTLFWSIFGLSEVISVVLKYDHKFIENIGYV. The chain crosses the membrane as a helical span at residues 652 to 672; the sequence is LYGVYNVTMVVVLLNMLIAMI. The Cytoplasmic portion of the chain corresponds to 673–862; it reads NNSYQEIEED…HLRVNQGKDI (190 aa).

Belongs to the transient receptor (TC 1.A.4) family. STrpC subfamily. TRPC7 sub-subfamily. As to quaternary structure, interacts with MX1 and RNF24. Interacts (via ANK-repeat domains) with PRKG1. Phosphorylation by PRKG1 at Thr-15 negatively regulates TRPC7 activity.

It localises to the cell membrane. The protein resides in the nucleus envelope. The catalysed reaction is Ca(2+)(in) = Ca(2+)(out). Functionally, forms a receptor-activated non-selective calcium permeant cation channel. Probably is operated by a phosphatidylinositol second messenger system activated by receptor tyrosine kinases or G-protein coupled receptors. Activated by diacylglycerol (DAG). May also be activated by intracellular calcium store depletion. This chain is Short transient receptor potential channel 7 (Trpc7), found in Mus musculus (Mouse).